A 176-amino-acid chain; its full sequence is Protein MOTHER of FT and TFL1 homolog 1 (176 aa).

Belongs to the phosphatidylethanolamine-binding protein family.

Functionally, may form complexes with phosphorylated ligands by interfering with kinases and their effectors. In Oryza sativa subsp. japonica (Rice), this protein is Protein MOTHER of FT and TFL1 homolog 1.